A 498-amino-acid polypeptide reads, in one-letter code: ATP synthase subunit beta, chloroplastic (498 aa).

172–179 (GGAGVGKT) is an ATP binding site.

This sequence belongs to the ATPase alpha/beta chains family. In terms of assembly, F-type ATPases have 2 components, CF(1) - the catalytic core - and CF(0) - the membrane proton channel. CF(1) has five subunits: alpha(3), beta(3), gamma(1), delta(1), epsilon(1). CF(0) has four main subunits: a(1), b(1), b'(1) and c(9-12).

Its subcellular location is the plastid. It localises to the chloroplast thylakoid membrane. The catalysed reaction is ATP + H2O + 4 H(+)(in) = ADP + phosphate + 5 H(+)(out). Its function is as follows. Produces ATP from ADP in the presence of a proton gradient across the membrane. The catalytic sites are hosted primarily by the beta subunits. The polypeptide is ATP synthase subunit beta, chloroplastic (Populus tremuloides (Quaking aspen)).